Consider the following 362-residue polypeptide: Chorismate synthase (362 aa).

Position 46 (arginine 46) interacts with NADP(+). Residues 122–124, 238–239, glycine 278, 293–297, and arginine 319 contribute to the FMN site; these read RSS, NA, and KPTPS.

Belongs to the chorismate synthase family. Homotetramer. FMNH2 is required as a cofactor.

It catalyses the reaction 5-O-(1-carboxyvinyl)-3-phosphoshikimate = chorismate + phosphate. The protein operates within metabolic intermediate biosynthesis; chorismate biosynthesis; chorismate from D-erythrose 4-phosphate and phosphoenolpyruvate: step 7/7. Functionally, catalyzes the anti-1,4-elimination of the C-3 phosphate and the C-6 proR hydrogen from 5-enolpyruvylshikimate-3-phosphate (EPSP) to yield chorismate, which is the branch point compound that serves as the starting substrate for the three terminal pathways of aromatic amino acid biosynthesis. This reaction introduces a second double bond into the aromatic ring system. The protein is Chorismate synthase of Campylobacter jejuni subsp. jejuni serotype O:2 (strain ATCC 700819 / NCTC 11168).